A 275-amino-acid chain; its full sequence is Shikimate dehydrogenase (NADP(+)) (275 aa).

Shikimate-binding positions include Ser-19–Ser-21 and Thr-66. Residue Lys-70 is the Proton acceptor of the active site. Glu-82 is an NADP(+) binding site. Residues Asn-91 and Asp-106 each coordinate shikimate. NADP(+) is bound by residues Gly-130–Ala-134, Asn-154–Lys-159, and Met-217. A shikimate-binding site is contributed by Tyr-219. Gly-241 is an NADP(+) binding site.

Belongs to the shikimate dehydrogenase family. As to quaternary structure, homodimer.

It carries out the reaction shikimate + NADP(+) = 3-dehydroshikimate + NADPH + H(+). It participates in metabolic intermediate biosynthesis; chorismate biosynthesis; chorismate from D-erythrose 4-phosphate and phosphoenolpyruvate: step 4/7. Its function is as follows. Involved in the biosynthesis of the chorismate, which leads to the biosynthesis of aromatic amino acids. Catalyzes the reversible NADPH linked reduction of 3-dehydroshikimate (DHSA) to yield shikimate (SA). This chain is Shikimate dehydrogenase (NADP(+)), found in Colwellia psychrerythraea (strain 34H / ATCC BAA-681) (Vibrio psychroerythus).